The sequence spans 510 residues: MAFNFGAPSGTSGTSTATAAPAGGFGGFGTTTTTAGSAFSFSAPTNTGSTGLLGGTQNKGFGFGTGFGTSTGTGTGLGTGLGTGLGFGGFNTQQQQQQQQTSLGGLFSQPAQAPAQSNQLINTASALSAPTLLGDERDAILAKWNQLQAFWGTGKGYFNNNIPPVEFTQENPFCRFKAVGYSCMPNNKDEDGLVVLIFNKKETDIRSQQQQLVESLHKVLGGNQTLTVNVEGIKTLPDDQTEVVIYIVERSPNGTSRRVPATTLYAHFEQANIKTQLQQLGVTLSMTRTELSPAQIKQLLQNPPAGVDPIIWEQAKVDNPDSEKLIPVPMVGFKELLRRLKVQDQMTKQHQTRLDIISEDISELQKNQTTTMAKIAQYKRKLMDLSHRTLQVLIKQEIQRKSGYAIQAEEEQLRVQLDTIQGELNAPTQFKGRLNELMSQIRMQNHFGAVKSEEKYYIDADLLREIKQHLKQQQEGLSHLISIIKDDLEDIKLVEHGLNETIHSRGGVFS.

8 repeat units span residues 5–6 (FG), 25–26 (FG), 28–29 (FG), 61–62 (FG), 63–64 (FG), 67–68 (FG), 87–88 (FG), and 447–448 (FG). An 8 X 2 AA repeats of F-G region spans residues 5-448 (FGAPSGTSGT…SQIRMQNHFG (444 aa)).

Belongs to the NUP54 family. As to quaternary structure, component of the p62 complex, a complex composed of NUP62, NUP54, and the isoform p58 and isoform p45 of NUP58. Interacts with NUTF2. O-glycosylated.

It is found in the nucleus. Its subcellular location is the nuclear pore complex. It localises to the nucleus membrane. Functionally, component of the nuclear pore complex, a complex required for the trafficking across the nuclear membrane. This chain is Nuclear pore complex protein Nup54 (Nup54), found in Rattus norvegicus (Rat).